Here is a 219-residue protein sequence, read N- to C-terminus: MEWEQIFHEIKEKYNFDKMDEILEKAYATQTVYPARENIYNAFKFTPFNDVKVVIIGQDPYHGPNQAHGLAFSVMDGTKLPPSLRNMYKELEDDLNIQRHTGELTGWAYEGVLLLNNVLTVVGGQAHSHKGIGWEQFTTEIVKAVSHYRENVVFILWGAPAQKLESLIDRSKHKVIKSVHPSPLSAYRGFFGSKPYSQTNEYLVAHNKTPIDWGREDIQ.

Catalysis depends on D59, which acts as the Proton acceptor.

Belongs to the uracil-DNA glycosylase (UDG) superfamily. UNG family.

Its subcellular location is the cytoplasm. It catalyses the reaction Hydrolyzes single-stranded DNA or mismatched double-stranded DNA and polynucleotides, releasing free uracil.. In terms of biological role, excises uracil residues from the DNA which can arise as a result of misincorporation of dUMP residues by DNA polymerase or due to deamination of cytosine. In Macrococcus caseolyticus (strain JCSC5402) (Macrococcoides caseolyticum), this protein is Uracil-DNA glycosylase.